A 493-amino-acid polypeptide reads, in one-letter code: Voltage-gated potassium channel regulatory subunit KCNF1 (493 aa).

Residues 1 to 183 (MDASAEQSLP…KPESSCPARV (183 aa)) lie on the Cytoplasmic side of the membrane. A helical membrane pass occupies residues 184–204 (VAVLSFLLILVSSVVMCMGTI). Residues 205-223 (PELQVVDSEGNRVEHPTLE) lie on the Extracellular side of the membrane. A helical membrane pass occupies residues 224 to 244 (NVETACIGWFTLEYLLRLFSS). At 245 to 249 (PNKLH) the chain is on the cytoplasmic side. The helical transmembrane segment at 250-270 (FALSFMNIVDVLAILPFYVSL) threads the bilayer. The Extracellular segment spans residues 271-289 (TLTHLGARMMELTNVQQAV). The helical; Voltage-sensor transmembrane segment at 290 to 310 (QALRIMRIARIFKLARHSSGL) threads the bilayer. The Cytoplasmic portion of the chain corresponds to 311 to 324 (QTLTYALKRSFKEL). The helical transmembrane segment at 325 to 345 (GLLLMYLAVGIFVFSALGYTM) threads the bilayer. The Extracellular segment spans residues 346 to 357 (EQSHPETLFKSI). The segment at residues 358-378 (PQSFWWAIITMTTVGYGDIYP) is an intramembrane region (pore-forming). The Selectivity filter motif lies at 370–375 (TVGYGD). Over 379–385 (KTTLGKL) the chain is Extracellular. The helical transmembrane segment at 386-406 (NAAISFLCGVIAIALPIHPII) threads the bilayer. Topologically, residues 407–493 (NNFVRYYNKQ…HHRTRLQSCK (87 aa)) are cytoplasmic. Residues 433 to 468 (NSSSAESKPGGSRSDLDTLPPEPAAREGPSWGSRLK) form a disordered region.

The protein belongs to the potassium channel family. F (TC 1.A.1.2) subfamily. Kv5.1/KCNF1 sub-subfamily. As to quaternary structure, heterotetramer with KCNB1 or KCNB2. Expressed in brain namely in the piriform cortex, olfactory tubercle, and medial habenular nucleus. Also expressed in the medial amygdaloid nuclei and the lateral amygdaloid area.

The protein localises to the cell membrane. Its function is as follows. Regulatory alpha-subunit of the voltage-gated potassium (Kv) channel which, when coassembled with KCNB1 or KCNB2, can modulate their expression and their gating kinetics by acting on deactivation upon repolarization and inactivation during maintained depolarization. Accelerates inactivation but has relatively little effect on deactivation. Coexpression with KCNB1 or KCNB2 markedly slows inactivation. Each modulatory subunit has its own specific properties of regulation, and can lead to extensive inhibitions, to large changes in kinetics, and/or to large shifts in the voltage dependencies of the inactivation process. The gating kinetics depends on the nature and stoichiometry of the associated regulatory sunbunit. Fails to produce a potassium current when expressed alone. The sequence is that of Voltage-gated potassium channel regulatory subunit KCNF1 from Rattus norvegicus (Rat).